The primary structure comprises 376 residues: 23S rRNA (uracil(747)-C(5))-methyltransferase RlmC (376 aa).

[4Fe-4S] cluster-binding residues include C3, C11, C14, and C88. Residues Q213, F242, E263, and N308 each coordinate S-adenosyl-L-methionine. The Nucleophile role is filled by C335.

Belongs to the class I-like SAM-binding methyltransferase superfamily. RNA M5U methyltransferase family. RlmC subfamily.

It catalyses the reaction uridine(747) in 23S rRNA + S-adenosyl-L-methionine = 5-methyluridine(747) in 23S rRNA + S-adenosyl-L-homocysteine + H(+). Catalyzes the formation of 5-methyl-uridine at position 747 (m5U747) in 23S rRNA. This Vibrio vulnificus (strain YJ016) protein is 23S rRNA (uracil(747)-C(5))-methyltransferase RlmC.